We begin with the raw amino-acid sequence, 114 residues long: Hydrogenase maturation factor HypA (114 aa).

Residue His2 coordinates Ni(2+). Residues Cys73, Cys76, Cys89, and Cys92 each coordinate Zn(2+).

This sequence belongs to the HypA/HybF family.

Its function is as follows. Involved in the maturation of [NiFe] hydrogenases. Required for nickel insertion into the metal center of the hydrogenase. This Caldanaerobacter subterraneus subsp. tengcongensis (strain DSM 15242 / JCM 11007 / NBRC 100824 / MB4) (Thermoanaerobacter tengcongensis) protein is Hydrogenase maturation factor HypA.